The following is a 382-amino-acid chain: Sphingosine 1-phosphate receptor 1 (382 aa).

The Extracellular segment spans residues 1–46 (MGSTRIPLVKALHSPVSDYVNYDIIVRHYNYTGKLKISADKDNGIK). At K10 the chain carries N6-acetyllysine. A glycan (N-linked (GlcNAc...) asparagine) is linked at N30. Residues 47–68 (LISVVFILICCFIILENIFVLL) form a helical membrane-spanning segment. Over 69–82 (TIWKTKKFHRPMYY) the chain is Cytoplasmic. Residues 83–104 (FIGNLALSDLLAGVAYTANLLL) form a helical membrane-spanning segment. The Extracellular portion of the chain corresponds to 105–116 (SGATTYKLTPAQ). Residues 117–138 (WFLREGSMFVALSASVFSLLAI) traverse the membrane as a helical segment. 120–121 (RE) is a binding site for sphing-4-enine 1-phosphate. Residues 139-160 (AIERYITMLKMKLHNGSNRFRS) are Cytoplasmic-facing. Residues 161–182 (FLLISACWVISLILGGLPIMGW) traverse the membrane as a helical segment. At 183-196 (NCISTLPSCSTVLP) the chain is on the extracellular side. An intrachain disulfide couples C184 to C191. Residues 197–224 (LYHKHYILFCTTVFTLLLLSIVILYCRI) form a helical membrane-spanning segment. Over 225–257 (YSLVRTRSRRLTFRKNISKASRSSEKSLALLKT) the chain is Cytoplasmic. The residue at position 236 (T236) is a Phosphothreonine; by PKB/AKT1. The chain crosses the membrane as a helical span at residues 258-278 (VIIVLGVFIACWAPLFILLLL). 265–269 (FIACW) serves as a coordination point for sphing-4-enine 1-phosphate. Residues 279-289 (DVGCKVKTCDI) are Extracellular-facing. Cysteines 282 and 287 form a disulfide. The chain crosses the membrane as a helical span at residues 290–310 (LFRTEYFLVLAVLNSGTNPII). Residues 311 to 382 (YTLSNKEMRR…MSSGNVNSSS (72 aa)) lie on the Cytoplasmic side of the membrane. The S-palmitoyl cysteine moiety is linked to residue C328. The tract at residues 349–382 (EFSRSKSDNSSHPQKDDGDNPETIMSSGNVNSSS) is disordered. 2 positions are modified to phosphoserine: S351 and S353. Basic and acidic residues predominate over residues 351–366 (SRSKSDNSSHPQKDDG). Polar residues predominate over residues 371 to 382 (TIMSSGNVNSSS).

It belongs to the G-protein coupled receptor 1 family. Interacts with GNAI1 and GNAI3. Interacts with CD69; this interaction promotes S1PR1 degradation. S1P-induced endothelial cell migration requires the PKB/AKT1-mediated phosphorylation of the third intracellular loop at the Thr-236 residue. Post-translationally, palmitoylated by ZDHHC5. Palmitoylation is required for targeting to plasma membrane, enabling G(i) coupling.

It localises to the cell membrane. Its subcellular location is the endosome. It is found in the membrane raft. Functionally, G-protein coupled receptor for the bioactive lysosphingolipid sphingosine 1-phosphate (S1P) that seems to be coupled to the G(i) subclass of heteromeric G proteins. Signaling leads to the activation of RAC1, SRC, PTK2/FAK1 and MAP kinases. Plays an important role in cell migration, probably via its role in the reorganization of the actin cytoskeleton and the formation of lamellipodia in response to stimuli that increase the activity of the sphingosine kinase SPHK1. Required for normal chemotaxis toward sphingosine 1-phosphate. Required for normal embryonic heart development and normal cardiac morphogenesis. Plays an important role in the regulation of sprouting angiogenesis and vascular maturation. Inhibits sprouting angiogenesis to prevent excessive sprouting during blood vessel development. Required for normal egress of mature T-cells from the thymus into the blood stream and into peripheral lymphoid organs. Plays a role in the migration of osteoclast precursor cells, the regulation of bone mineralization and bone homeostasis. Plays a role in responses to oxidized 1-palmitoyl-2-arachidonoyl-sn-glycero-3-phosphocholine by pulmonary endothelial cells and in the protection against ventilator-induced lung injury. This Bos taurus (Bovine) protein is Sphingosine 1-phosphate receptor 1 (S1PR1).